We begin with the raw amino-acid sequence, 215 residues long: Protein-L-isoaspartate O-methyltransferase (215 aa).

The active site involves serine 62.

This sequence belongs to the methyltransferase superfamily. L-isoaspartyl/D-aspartyl protein methyltransferase family.

The protein resides in the cytoplasm. The catalysed reaction is [protein]-L-isoaspartate + S-adenosyl-L-methionine = [protein]-L-isoaspartate alpha-methyl ester + S-adenosyl-L-homocysteine. Catalyzes the methyl esterification of L-isoaspartyl residues in peptides and proteins that result from spontaneous decomposition of normal L-aspartyl and L-asparaginyl residues. It plays a role in the repair and/or degradation of damaged proteins. The chain is Protein-L-isoaspartate O-methyltransferase from Nitratidesulfovibrio vulgaris (strain DSM 19637 / Miyazaki F) (Desulfovibrio vulgaris).